The following is a 194-amino-acid chain: Peptidyl-tRNA hydrolase (194 aa).

Y16 serves as a coordination point for tRNA. The active-site Proton acceptor is the H21. Residues F67, N69, and N115 each coordinate tRNA.

It belongs to the PTH family. Monomer.

It is found in the cytoplasm. The catalysed reaction is an N-acyl-L-alpha-aminoacyl-tRNA + H2O = an N-acyl-L-amino acid + a tRNA + H(+). In terms of biological role, hydrolyzes ribosome-free peptidyl-tRNAs (with 1 or more amino acids incorporated), which drop off the ribosome during protein synthesis, or as a result of ribosome stalling. Functionally, catalyzes the release of premature peptidyl moieties from peptidyl-tRNA molecules trapped in stalled 50S ribosomal subunits, and thus maintains levels of free tRNAs and 50S ribosomes. The sequence is that of Peptidyl-tRNA hydrolase from Shigella dysenteriae serotype 1 (strain Sd197).